The sequence spans 154 residues: Histone H2B.5 (154 aa).

Positions 1-25 (MAPKAEKKPAAKKVAEEEPSEKAAP) are enriched in basic and acidic residues. The tract at residues 1–62 (MAPKAEKKPA…DKKGRKKAKK (62 aa)) is disordered. N6-acetyllysine occurs at positions 7 and 39. K150 participates in a covalent cross-link: Glycyl lysine isopeptide (Lys-Gly) (interchain with G-Cter in ubiquitin).

The protein belongs to the histone H2B family. The nucleosome is a histone octamer containing two molecules each of H2A, H2B, H3 and H4 assembled in one H3-H4 heterotetramer and two H2A-H2B heterodimers. The octamer wraps approximately 147 bp of DNA. In terms of processing, can be acetylated to form H2BK6ac and H2BK33ac. Post-translationally, monoubiquitinated to form H2BK143ub1; may give a specific tag for epigenetic transcriptional activation.

It is found in the nucleus. The protein resides in the chromosome. In terms of biological role, core component of nucleosome. Nucleosomes wrap and compact DNA into chromatin, limiting DNA accessibility to the cellular machineries which require DNA as a template. Histones thereby play a central role in transcription regulation, DNA repair, DNA replication and chromosomal stability. DNA accessibility is regulated via a complex set of post-translational modifications of histones, also called histone code, and nucleosome remodeling. The chain is Histone H2B.5 from Zea mays (Maize).